A 397-amino-acid polypeptide reads, in one-letter code: Lysophospholipid transporter LplT (397 aa).

Over 1–17 (MSESVHTNTSLWSKGMK) the chain is Periplasmic. The helical transmembrane segment at 18-38 (AVIVAQFLSAFGDNALLFATL) threads the bilayer. Topologically, residues 39 to 52 (ALLKAQFYPEWSQP) are cytoplasmic. A helical membrane pass occupies residues 53-73 (ILQMVFVGAYILFAPFVGQVA). Residues 74 to 90 (DSFAKGRVMMFANGLKL) are Periplasmic-facing. Residues 91–111 (LGAASICFGINPFLGYTLVGV) traverse the membrane as a helical segment. Residues 112 to 144 (GAAAYSPAKYGILGELTTGSKLVKANGLMEAST) lie on the Cytoplasmic side of the membrane. A helical transmembrane segment spans residues 145–165 (IAAILLGSVAGGVLADWHILV). Position 166 (alanine 166) is a topological domain, periplasmic. Residues 167–187 (LAACALAYGGAVVANIYIPKL) traverse the membrane as a helical segment. Over 188 to 226 (AAARPGQSWNLISMTRSFLNACTSLWRNGETRFSLVGTS) the chain is Cytoplasmic. A helical transmembrane segment spans residues 227 to 247 (LFWGAGVTLRFLLVLWVPVAL). At 248–256 (GITDNATPT) the chain is on the periplasmic side. The helical transmembrane segment at 257 to 277 (YLNAMVAIGIVVGAGAAAKLV) threads the bilayer. The Cytoplasmic segment spans residues 278–280 (TLE). Residues 281–301 (TVSRCMPAGILIGVVVLIFSL) form a helical membrane-spanning segment. At 302–304 (QHE) the chain is on the periplasmic side. A helical membrane pass occupies residues 305–325 (LLPAYALLMLIGVLGGFFVVP). Residues 326 to 343 (LNALLQERGKKSVGAGNA) are Cytoplasmic-facing. Residues 344–364 (IAVQNLGENSAMLLMLGIYSL) form a helical membrane-spanning segment. Residues 365-366 (AV) lie on the Periplasmic side of the membrane. A helical membrane pass occupies residues 367 to 387 (MVGIPVVPIGIGFGALFALAI). The Cytoplasmic segment spans residues 388–397 (TALWIWQRRH).

This sequence belongs to the major facilitator superfamily. LplT (TC 2.A.1.42) family.

It localises to the cell inner membrane. In terms of biological role, catalyzes the facilitated diffusion of 2-acyl-glycero-3-phosphoethanolamine (2-acyl-GPE) into the cell. This Escherichia coli O6:K15:H31 (strain 536 / UPEC) protein is Lysophospholipid transporter LplT.